Consider the following 337-residue polypeptide: tRNA N6-adenosine threonylcarbamoyltransferase (337 aa).

Residues H111 and H115 each contribute to the Fe cation site. Substrate-binding positions include 134 to 138 (LVSGG), D167, G180, and N272. Residue D300 participates in Fe cation binding.

It belongs to the KAE1 / TsaD family. The cofactor is Fe(2+).

Its subcellular location is the cytoplasm. It carries out the reaction L-threonylcarbamoyladenylate + adenosine(37) in tRNA = N(6)-L-threonylcarbamoyladenosine(37) in tRNA + AMP + H(+). Its function is as follows. Required for the formation of a threonylcarbamoyl group on adenosine at position 37 (t(6)A37) in tRNAs that read codons beginning with adenine. Is involved in the transfer of the threonylcarbamoyl moiety of threonylcarbamoyl-AMP (TC-AMP) to the N6 group of A37, together with TsaE and TsaB. TsaD likely plays a direct catalytic role in this reaction. The polypeptide is tRNA N6-adenosine threonylcarbamoyltransferase (Shewanella sediminis (strain HAW-EB3)).